Reading from the N-terminus, the 85-residue chain is RNA-binding protein KhpA (85 aa).

A KH domain is found at 32-85; sequence YLEYNLTVNPEDIGRVIGRQGRVASAIRTIVYSVRVSGPKRVRLTIEDGQQKNS.

It belongs to the KhpA RNA-binding protein family. Forms a complex with KhpB.

The protein localises to the cytoplasm. Its function is as follows. A probable RNA chaperone. Forms a complex with KhpB which binds to cellular RNA and controls its expression. Plays a role in peptidoglycan (PG) homeostasis and cell length regulation. Necessary for correct cell elongation. The chain is RNA-binding protein KhpA from Lactiplantibacillus plantarum (strain ATCC BAA-793 / NCIMB 8826 / WCFS1) (Lactobacillus plantarum).